A 147-amino-acid chain; its full sequence is Hemoglobin subunit epsilon (147 aa).

The 145-residue stretch at 3–147 folds into the Globin domain; sequence HFTAEEKAAI…VAIALGHKYH (145 aa). Phosphoserine occurs at positions 14 and 51. 2 residues coordinate heme b: histidine 64 and histidine 93.

Belongs to the globin family. As to quaternary structure, heterotetramer of two alpha chains and two epsilon chains in early embryonic hemoglobin Gower-2; two zeta chains and two epsilon chains in early embryonic hemoglobin Gower-1. In terms of tissue distribution, red blood cells.

Its function is as follows. The epsilon chain is a beta-type chain of early mammalian embryonic hemoglobin. The polypeptide is Hemoglobin subunit epsilon (HBE1) (Alouatta belzebul (Red-handed howler monkey)).